The sequence spans 83 residues: Small ribosomal subunit protein bS16 (83 aa).

The protein belongs to the bacterial ribosomal protein bS16 family.

The polypeptide is Small ribosomal subunit protein bS16 (Finegoldia magna (strain ATCC 29328 / DSM 20472 / WAL 2508) (Peptostreptococcus magnus)).